A 346-amino-acid chain; its full sequence is UPF0718 protein YraQ (346 aa).

The next 9 membrane-spanning stretches (helical) occupy residues 12–32 (PIQW…LWYV), 71–91 (MIYF…GSLI), 113–133 (LLGT…APVA), 146–166 (ALAF…FMGF), 167–187 (VLGW…VLLI), 223–243 (ALWT…LVLG), 260–280 (SLMW…PTAA), 296–316 (APAL…LIML), and 326–346 (WLTG…ALLF).

It belongs to the UPF0718 family.

The protein localises to the cell membrane. This is UPF0718 protein YraQ (yraQ) from Escherichia coli (strain K12).